The following is a 166-amino-acid chain: 3-isopropylmalate dehydratase small subunit (166 aa).

It belongs to the LeuD family. LeuD type 2 subfamily. As to quaternary structure, heterodimer of LeuC and LeuD.

The enzyme catalyses (2R,3S)-3-isopropylmalate = (2S)-2-isopropylmalate. The protein operates within amino-acid biosynthesis; L-leucine biosynthesis; L-leucine from 3-methyl-2-oxobutanoate: step 2/4. Its function is as follows. Catalyzes the isomerization between 2-isopropylmalate and 3-isopropylmalate, via the formation of 2-isopropylmaleate. The polypeptide is 3-isopropylmalate dehydratase small subunit (Moorella thermoacetica (strain ATCC 39073 / JCM 9320)).